Consider the following 196-residue polypeptide: Small ribosomal subunit protein uS4c (196 aa).

The tract at residues Ala-17–Ser-38 is disordered. Residues Lys-24–Ser-38 show a composition bias toward basic residues. The S4 RNA-binding domain occupies Met-89–Leu-169.

This sequence belongs to the universal ribosomal protein uS4 family. In terms of assembly, part of the 30S ribosomal subunit. Contacts protein S5. The interaction surface between S4 and S5 is involved in control of translational fidelity.

The protein resides in the plastid. Its subcellular location is the chloroplast. Its function is as follows. One of the primary rRNA binding proteins, it binds directly to 16S rRNA where it nucleates assembly of the body of the 30S subunit. With S5 and S12 plays an important role in translational accuracy. The chain is Small ribosomal subunit protein uS4c (rps4) from Lygeum spartum.